A 319-amino-acid polypeptide reads, in one-letter code: Ribosomal protein uL3 glutamine methyltransferase (319 aa).

This sequence belongs to the protein N5-glutamine methyltransferase family. PrmB subfamily.

The enzyme catalyses L-glutaminyl-[ribosomal protein uL3] + S-adenosyl-L-methionine = N(5)-methyl-L-glutaminyl-[ribosomal protein uL3] + S-adenosyl-L-homocysteine + H(+). Functionally, methylates large ribosomal subunit protein uL3 on a specific glutamine residue. The chain is Ribosomal protein uL3 glutamine methyltransferase from Bradyrhizobium diazoefficiens (strain JCM 10833 / BCRC 13528 / IAM 13628 / NBRC 14792 / USDA 110).